The primary structure comprises 370 residues: Pyrimidine monooxygenase RutA (370 aa).

FMN contacts are provided by residues 49 to 50 (IK), Asn-115, Glu-124, 140 to 141 (RY), and Ser-190.

Belongs to the NtaA/SnaA/DszA monooxygenase family. RutA subfamily.

The enzyme catalyses uracil + FMNH2 + NADH + O2 = (Z)-3-ureidoacrylate + FMN + NAD(+) + H2O + H(+). It carries out the reaction thymine + FMNH2 + NADH + O2 = (Z)-2-methylureidoacrylate + FMN + NAD(+) + H2O + H(+). Functionally, catalyzes the pyrimidine ring opening between N-3 and C-4 by an unusual flavin hydroperoxide-catalyzed mechanism, adding oxygen atoms in the process to yield ureidoacrylate peracid, that immediately reacts with FMN forming ureidoacrylate and FMN-N(5)-oxide. The FMN-N(5)-oxide reacts spontaneously with NADH to produce FMN. Requires the flavin reductase RutF to regenerate FMN in vivo. The chain is Pyrimidine monooxygenase RutA from Variovorax paradoxus (strain S110).